A 285-amino-acid polypeptide reads, in one-letter code: 2-dehydro-3-deoxyphosphooctonate aldolase (285 aa).

The protein belongs to the KdsA family.

The protein resides in the cytoplasm. The catalysed reaction is D-arabinose 5-phosphate + phosphoenolpyruvate + H2O = 3-deoxy-alpha-D-manno-2-octulosonate-8-phosphate + phosphate. It functions in the pathway carbohydrate biosynthesis; 3-deoxy-D-manno-octulosonate biosynthesis; 3-deoxy-D-manno-octulosonate from D-ribulose 5-phosphate: step 2/3. The protein operates within bacterial outer membrane biogenesis; lipopolysaccharide biosynthesis. This is 2-dehydro-3-deoxyphosphooctonate aldolase from Delftia acidovorans (strain DSM 14801 / SPH-1).